The primary structure comprises 371 residues: Peptide chain release factor 2 (371 aa).

Q253 is subject to N5-methylglutamine.

It belongs to the prokaryotic/mitochondrial release factor family. Methylated by PrmC. Methylation increases the termination efficiency of RF2.

Its subcellular location is the cytoplasm. Peptide chain release factor 2 directs the termination of translation in response to the peptide chain termination codons UGA and UAA. The protein is Peptide chain release factor 2 (prfB) of Mycobacterium bovis (strain ATCC BAA-935 / AF2122/97).